A 93-amino-acid chain; its full sequence is C-C motif chemokine 14 (93 aa).

The first 19 residues, 1–19 (MKISVAAIPFFLLITIALG), serve as a signal peptide directing secretion. O-linked (GalNAc...) serine; partial glycosylation occurs at Ser-26. Intrachain disulfides connect Cys-35–Cys-59 and Cys-36–Cys-75.

The protein belongs to the intercrine beta (chemokine CC) family. Post-translationally, the N-terminal processed forms HCC-1(3-74), HCC-1(4-74) and HCC-1(9-74) are produced in small amounts by proteolytic cleavage after secretion in blood. HCC-1(1-74), but not HCC-1(3-74) and HCC-1(4-74), is partially O-glycosylated; the O-linked glycan consists of one Gal-GalNAc disaccharide, further modified by two N-acetylneuraminic acids. As to expression, expressed constitutively in several normal tissues: spleen, liver, skeletal and heart muscle, gut, and bone marrow, present at high concentrations (1-80 nM) in plasma.

The protein localises to the secreted. Functionally, has weak activities on human monocytes and acts via receptors that also recognize MIP-1 alpha. It induces intracellular Ca(2+) changes and enzyme release, but no chemotaxis, at concentrations of 100-1,000 nM, and is inactive on T-lymphocytes, neutrophils, and eosinophil leukocytes. Enhances the proliferation of CD34 myeloid progenitor cells. The processed form HCC-1(9-74) is a chemotactic factor that attracts monocytes, eosinophils, and T-cells and is a ligand for CCR1, CCR3 and CCR5. The protein is C-C motif chemokine 14 (CCL14) of Homo sapiens (Human).